A 601-amino-acid polypeptide reads, in one-letter code: Proline--tRNA ligase (601 aa).

The protein belongs to the class-II aminoacyl-tRNA synthetase family. ProS type 1 subfamily. Homodimer.

Its subcellular location is the cytoplasm. The catalysed reaction is tRNA(Pro) + L-proline + ATP = L-prolyl-tRNA(Pro) + AMP + diphosphate. Its function is as follows. Catalyzes the attachment of proline to tRNA(Pro) in a two-step reaction: proline is first activated by ATP to form Pro-AMP and then transferred to the acceptor end of tRNA(Pro). As ProRS can inadvertently accommodate and process non-cognate amino acids such as alanine and cysteine, to avoid such errors it has two additional distinct editing activities against alanine. One activity is designated as 'pretransfer' editing and involves the tRNA(Pro)-independent hydrolysis of activated Ala-AMP. The other activity is designated 'posttransfer' editing and involves deacylation of mischarged Ala-tRNA(Pro). The misacylated Cys-tRNA(Pro) is not edited by ProRS. In Picosynechococcus sp. (strain ATCC 27264 / PCC 7002 / PR-6) (Agmenellum quadruplicatum), this protein is Proline--tRNA ligase.